The primary structure comprises 171 residues: ATP synthase subunit b (171 aa).

A helical transmembrane segment spans residues 3–23; that stretch reads KFLFFIFVFVGISFAGDDTAT.

This sequence belongs to the ATPase B chain family. In terms of assembly, F-type ATPases have 2 components, F(1) - the catalytic core - and F(0) - the membrane proton channel. F(1) has five subunits: alpha(3), beta(3), gamma(1), delta(1), epsilon(1). F(0) has three main subunits: a(1), b(2) and c(10-14). The alpha and beta chains form an alternating ring which encloses part of the gamma chain. F(1) is attached to F(0) by a central stalk formed by the gamma and epsilon chains, while a peripheral stalk is formed by the delta and b chains.

It is found in the cell inner membrane. In terms of biological role, f(1)F(0) ATP synthase produces ATP from ADP in the presence of a proton or sodium gradient. F-type ATPases consist of two structural domains, F(1) containing the extramembraneous catalytic core and F(0) containing the membrane proton channel, linked together by a central stalk and a peripheral stalk. During catalysis, ATP synthesis in the catalytic domain of F(1) is coupled via a rotary mechanism of the central stalk subunits to proton translocation. Functionally, component of the F(0) channel, it forms part of the peripheral stalk, linking F(1) to F(0). In Campylobacter hominis (strain ATCC BAA-381 / DSM 21671 / CCUG 45161 / LMG 19568 / NCTC 13146 / CH001A), this protein is ATP synthase subunit b.